A 642-amino-acid polypeptide reads, in one-letter code: Chaperone protein DnaK (642 aa).

At T199 the chain carries Phosphothreonine; by autocatalysis. The span at 570–585 (EELEQASKDGDKEAID) shows a compositional bias: basic and acidic residues. A disordered region spans residues 570 to 642 (EELEQASKDG…FEEVKDDDKK (73 aa)). Over residues 600-620 (EAAQQQQAQQGAEGAAGGEQQ) the composition is skewed to low complexity. The segment covering 627–642 (DVVDAEFEEVKDDDKK) has biased composition (acidic residues).

It belongs to the heat shock protein 70 family.

Acts as a chaperone. The polypeptide is Chaperone protein DnaK (Idiomarina loihiensis (strain ATCC BAA-735 / DSM 15497 / L2-TR)).